The sequence spans 252 residues: Chitooligosaccharide deacetylase (252 aa).

Residues His61 and His125 each contribute to the Mg(2+) site.

The protein belongs to the YdjC deacetylase family. ChbG subfamily. Homodimer. Requires Mg(2+) as cofactor.

The protein localises to the cytoplasm. It carries out the reaction N,N'-diacetylchitobiose + H2O = N-acetyl-beta-D-glucosaminyl-(1-&gt;4)-D-glucosamine + acetate. It catalyses the reaction diacetylchitobiose-6'-phosphate + H2O = N'-monoacetylchitobiose-6'-phosphate + acetate. It participates in glycan degradation; chitin degradation. Functionally, involved in the degradation of chitin. ChbG is essential for growth on the acetylated chitooligosaccharides chitobiose and chitotriose but is dispensable for growth on cellobiose and chitosan dimer, the deacetylated form of chitobiose. Deacetylation of chitobiose-6-P and chitotriose-6-P is necessary for both the activation of the chb promoter by the regulatory protein ChbR and the hydrolysis of phosphorylated beta-glucosides by the phospho-beta-glucosidase ChbF. Catalyzes the removal of only one acetyl group from chitobiose-6-P to yield monoacetylchitobiose-6-P, the inducer of ChbR and the substrate of ChbF. This chain is Chitooligosaccharide deacetylase, found in Enterobacter sp. (strain 638).